Reading from the N-terminus, the 756-residue chain is Putative beta-xylosidase (756 aa).

Residues 1-18 (MKKLLFTFLVSTGTIFFS) form the signal peptide. Residue C19 is the site of N-palmitoyl cysteine attachment. C19 carries S-diacylglycerol cysteine lipidation.

The protein belongs to the glycosyl hydrolase 3 family.

It is found in the cell outer membrane. Glycoside hydrolase probably involved in ulvan degradation. Ulvan is the main polysaccharide component of the Ulvales (green seaweed) cell wall. It is composed of disaccharide building blocks comprising 3-sulfated rhamnose (Rha3S) linked to D-glucuronic acid (GlcA), L-iduronic acid (IduA), or D-xylose (Xyl). This is Putative beta-xylosidase from Formosa agariphila (strain DSM 15362 / KCTC 12365 / LMG 23005 / KMM 3901 / M-2Alg 35-1).